Consider the following 202-residue polypeptide: ATP-dependent Clp protease proteolytic subunit (202 aa).

The Nucleophile role is filled by Ser98. The active site involves His123.

This sequence belongs to the peptidase S14 family. As to quaternary structure, fourteen ClpP subunits assemble into 2 heptameric rings which stack back to back to give a disk-like structure with a central cavity, resembling the structure of eukaryotic proteasomes.

It localises to the cytoplasm. It catalyses the reaction Hydrolysis of proteins to small peptides in the presence of ATP and magnesium. alpha-casein is the usual test substrate. In the absence of ATP, only oligopeptides shorter than five residues are hydrolyzed (such as succinyl-Leu-Tyr-|-NHMec, and Leu-Tyr-Leu-|-Tyr-Trp, in which cleavage of the -Tyr-|-Leu- and -Tyr-|-Trp bonds also occurs).. In terms of biological role, cleaves peptides in various proteins in a process that requires ATP hydrolysis. Has a chymotrypsin-like activity. Plays a major role in the degradation of misfolded proteins. This is ATP-dependent Clp protease proteolytic subunit from Desulfovibrio desulfuricans (strain ATCC 27774 / DSM 6949 / MB).